Reading from the N-terminus, the 474-residue chain is uncharacterized protein (474 aa).

Helical transmembrane passes span isoleucine 17–tyrosine 39, phenylalanine 44–leucine 61, leucine 81–tyrosine 103, glycine 144–tyrosine 166, isoleucine 186–phenylalanine 208, isoleucine 239–histidine 256, isoleucine 268–isoleucine 286, leucine 319–valine 341, alanine 385–glycine 407, and isoleucine 444–phenylalanine 466.

This sequence belongs to the TrkH potassium transport family.

The protein localises to the cell membrane. This is an uncharacterized protein from Methanocaldococcus jannaschii (strain ATCC 43067 / DSM 2661 / JAL-1 / JCM 10045 / NBRC 100440) (Methanococcus jannaschii).